Reading from the N-terminus, the 363-residue chain is MSNLEKQIRLKNLLESLNGSKSQADLKKESQTLIDIFKQTRQKMIHDQQSNLHPVTSIQGKKLLNLRKALQNHQKHRDNIKVVKTNAEPVSTHDQTVDSNSDSSSSETLIDTSTSSSFDNIKRWLHETNSNESQSKGRPSEYTHVNSPDSGVSSKSGQLSMLTQDSNQILLLIKQLTAKYNMLESFFINSFEQLIALFDNFYFLSSLIGFNTSNSNSKITRLLRNFIKQASKIWLVIIFLTVKNLFIRMIKLNRTEKKVKLERDILMSRSPNSSIQYEYDAMLLTIRTSKISTFLEMLGNVNEFAFYLIQVMNWKVSKKVKNILAGISWIMSIYRMSKDEIQETNPSINNGLKSSDDIIDEYA.

Residues 1-193 (MSNLEKQIRL…ESFFINSFEQ (193 aa)) are Cytoplasmic-facing. Disordered regions lie at residues 71–114 (QNHQ…DTST) and 128–157 (TNSN…SKSG). Residues 97–114 (VDSNSDSSSSETLIDTST) are compositionally biased toward low complexity. Residues 194–213 (LIALFDNFYFLSSLIGFNTS) traverse the membrane as a helical segment. Residues 214-232 (NSNSKITRLLRNFIKQASK) are Peroxisomal-facing. A helical transmembrane segment spans residues 233 to 250 (IWLVIIFLTVKNLFIRMI). Over 251–363 (KLNRTEKKVK…SSDDIIDEYA (113 aa)) the chain is Cytoplasmic.

The protein localises to the peroxisome membrane. Functionally, controls peroxisome morphology and abundance under conditions of peroxisome proliferation such as oleate and methanol media. Has additional function(s), which is not present in its functional homologs such as Saccharomyces cerevisea PEX34 or human PEX16. This chain is Peroxin-36, found in Komagataella phaffii (strain GS115 / ATCC 20864) (Yeast).